The sequence spans 839 residues: Autophagy-related protein 9A (839 aa).

A disordered region spans residues 1 to 21; the sequence is MAQFDTEYQRLEASYSDSPPG. Residue A2 is modified to N-acetylalanine. Residues 2-61 lie on the Cytoplasmic side of the membrane; sequence AQFDTEYQRLEASYSDSPPGEEDLLVHVPEGSKSPWHHIENLDLFFSRVYNLHQKNGFTC. A Tyrosine-based sorting signal motif is present at residues 8–11; sequence YQRL. 3 positions are modified to phosphoserine: S14, S16, and S18. Residues 62–84 traverse the membrane as a helical segment; sequence MLIGEIFELMQFLFVVAFTTFLV. Residues 85–128 lie on the Lumenal side of the membrane; that stretch reads SCVDYDILFANKMVNHSLHPTEPVKVTLPDAFLPAQVCSARIQE. N99 carries an N-linked (GlcNAc...) asparagine glycan. A helical membrane pass occupies residues 129-154; sequence NGSLITILVIAGVFWVHRLIKFIYNI. The Cytoplasmic segment spans residues 155-290; that stretch reads CCYWEIHSFY…ELAQRLSNRI (136 aa). The stretch at 291–301 is an intramembrane region; sequence LWIGIANFLLC. The Cytoplasmic portion of the chain corresponds to 302–319; it reads PLILIWQILYAFFSYAEV. An intramembrane segment occupies 320-328; sequence LKREPGALG. Residues 329-371 are Cytoplasmic-facing; it reads ARCWSLYGRCYLRHFNELEHELQSRLNRGYKPASKYMNCFLSP. The chain crosses the membrane as a helical span at residues 372 to 397; that stretch reads LLTLLAKNCAFFAGSILAVLIALTIY. Over 398 to 406 the chain is Lumenal; sequence DEDVLAVEH. The chain crosses the membrane as a helical span at residues 407 to 424; it reads VLTTVTLLGVTVTVCRSF. The Cytoplasmic segment spans residues 425–470; it reads IPDQHMVFCPEQLLRVILAHIHYMPDHWQGNAHRSQTRDEFAQLFQ. The stretch at 471 to 480 is an intramembrane region; the sequence is YKAVFILEEL. Residues 481–483 are Cytoplasmic-facing; it reads LSP. An intramembrane segment occupies 484 to 492; that stretch reads IVTPLILIF. Topologically, residues 493-839 are cytoplasmic; sequence CLRPRALEII…DELPPQVHKV (347 aa). Phosphoserine occurs at positions 656, 735, 738, 741, and 828. Disordered stretches follow at residues 656–688 and 719–839; these read SPLQ…GSSV and QQAQ…VHKV. Residues 724–736 are compositionally biased toward basic and acidic residues; sequence EPERHVWHRRESD. 2 stretches are compositionally biased toward acidic residues: residues 737–747 and 823–832; these read ESGESAPEEGG and VPEEGSEDEL.

It belongs to the ATG9 family. In terms of assembly, homotrimer; forms a homotrimer with a central pore that forms a path between the two membrane leaflets. Interacts (via cytoplasmic its C-terminus) with ATG2A. Interacts with SUPT20H. Interacts (via the tyrosine-based sorting signal motif) with AP4M1; promoting association with the AP-4 complex. Interacts with ARFIP1 and ARFIP2. Interacts with PI4K2A and PI4KB. Interacts with ATG4A; the interaction is direct and promotes ATG9A trafficking. Ufmylated in a DDRGK1 dependent manner.

The protein localises to the preautophagosomal structure membrane. Its subcellular location is the cytoplasmic vesicle. It localises to the autophagosome membrane. It is found in the golgi apparatus. The protein resides in the trans-Golgi network membrane. The protein localises to the late endosome membrane. Its subcellular location is the recycling endosome membrane. It localises to the endoplasmic reticulum membrane. It is found in the mitochondrion membrane. It catalyses the reaction a 1,2-diacyl-sn-glycero-3-phosphocholine(in) = a 1,2-diacyl-sn-glycero-3-phosphocholine(out). The enzyme catalyses a 1,2-diacyl-sn-glycero-3-phospho-L-serine(in) = a 1,2-diacyl-sn-glycero-3-phospho-L-serine(out). The catalysed reaction is a 1,2-diacyl-sn-glycero-3-phosphoethanolamine(in) = a 1,2-diacyl-sn-glycero-3-phosphoethanolamine(out). Its function is as follows. Phospholipid scramblase involved in autophagy by mediating autophagosomal membrane expansion. Cycles between the preautophagosomal structure/phagophore assembly site (PAS) and the cytoplasmic vesicle pool and supplies membrane for the growing autophagosome. Lipid scramblase activity plays a key role in preautophagosomal structure/phagophore assembly by distributing the phospholipids that arrive through ATG2 (ATG2A or ATG2B) from the cytoplasmic to the luminal leaflet of the bilayer, thereby driving autophagosomal membrane expansion. Also required to supply phosphatidylinositol 4-phosphate to the autophagosome initiation site by recruiting the phosphatidylinositol 4-kinase beta (PI4KB) in a process dependent on ARFIP2, but not ARFIP1. In addition to autophagy, also plays a role in necrotic cell death. This chain is Autophagy-related protein 9A, found in Bos taurus (Bovine).